The sequence spans 101 residues: uncharacterized protein (101 aa).

The next 2 helical transmembrane spans lie at 10-30 and 67-87; these read VLAI…IGSI and IILG…ILSI.

The protein localises to the membrane. This is an uncharacterized protein from Acanthamoeba polyphaga (Amoeba).